Here is a 389-residue protein sequence, read N- to C-terminus: Ethanolamine-phosphate cytidylyltransferase (389 aa).

Residues 1–20 (MIRNGRGAAGGAEQPGPGGR) are disordered. CTP is bound by residues 221–222 (AF), 229–232 (HVDF), Lys259, 307–310 (HGKT), and 336–340 (SGSNL). Position 338 is a phosphoserine (Ser338). Phosphothreonine is present on residues Thr341 and Thr342.

Belongs to the cytidylyltransferase family. In terms of tissue distribution, strongest expression in liver, heart, and skeletal muscle.

It catalyses the reaction phosphoethanolamine + CTP + H(+) = CDP-ethanolamine + diphosphate. The protein operates within phospholipid metabolism; phosphatidylethanolamine biosynthesis; phosphatidylethanolamine from ethanolamine: step 2/3. In terms of biological role, ethanolamine-phosphate cytidylyltransferase that catalyzes the second step in the synthesis of phosphatidylethanolamine (PE) from ethanolamine via the CDP-ethanolamine pathway. Phosphatidylethanolamine is a dominant inner-leaflet phospholipid in cell membranes, where it plays a role in membrane function by structurally stabilizing membrane-anchored proteins, and participates in important cellular processes such as cell division, cell fusion, blood coagulation, and apoptosis. The sequence is that of Ethanolamine-phosphate cytidylyltransferase (PCYT2) from Homo sapiens (Human).